A 391-amino-acid polypeptide reads, in one-letter code: Probable FAD-dependent oxidoreductase PA4991 (391 aa).

Residues alanine 17, glutamate 36, 44–45 (QS), 49–51 (QGI), and 346–347 (LA) contribute to the FAD site.

Belongs to the DAO family. In terms of assembly, monomer. Requires FAD as cofactor.

Its function is as follows. Probably functions as a FAD-dependent oxidoreductase, whose physiological substrate is unknown. Does not display amino-acid oxidase or glycerol-3-phosphate dehydrogenase activities. Is essential for growth of P.aeruginosa in the sputum of cystic fibrosis patients. This is Probable FAD-dependent oxidoreductase PA4991 from Pseudomonas aeruginosa (strain ATCC 15692 / DSM 22644 / CIP 104116 / JCM 14847 / LMG 12228 / 1C / PRS 101 / PAO1).